The primary structure comprises 375 residues: Deoxyhypusine synthase-like protein (375 aa).

This sequence belongs to the deoxyhypusine synthase family.

This is Deoxyhypusine synthase-like protein from Elusimicrobium minutum (strain Pei191).